A 402-amino-acid polypeptide reads, in one-letter code: uncharacterized protein (402 aa).

12 helical membrane-spanning segments follow: residues 11–31 (LALAFLLGMLAILGPLNIDMY), 48–68 (LVQLSLTACLVGLTIGQLIVG), 80–100 (LLICIFLFALSSLFCALSPNI), 108–125 (FLQGFTASAGLVLSRAIV), 140–160 (LLMVITAVAPMVAPMTGGAIL), 167–187 (WHTIFHVLMIIGFLLVLLIAL), 219–239 (FMGYALTVGFIHGGSFAYVSG), 254–274 (VFSILFGINGLAIISGSFIIG), 286–306 (LRIAVITAMIATAVLLTMTMI), 308–328 (GPLATLVISIFIYMITIGMVL), 347–367 (SALLGMLPLLLGSIVSPLVGI), and 373–393 (VPMGAIMFVTAVIGSLAFFGL).

The protein belongs to the major facilitator superfamily. Bcr/CmlA family.

Its subcellular location is the cell membrane. This is an uncharacterized protein from Bacillus subtilis (strain 168).